The sequence spans 541 residues: MVINLCLPQFRPRIHCNKISADGYEVENLISEDLTKRSHGFRTEYFIKPPVYVTVSFPFNVEICRINIDLTAGGGQNVTGLEMYTSASSSRVSWNTPQCRTLGPAEPSVPDKEAFTLVGKVLLKNQSQVVFSHRGFKARPPFGAMEATLPSPAVVAQELWNKGALSLSHVAHLRICITHVTGGGIPCIKRLEVWGQPAKTCSQEVIDSILLVTSENLPQDVALQAPALPMESDCDPGDQPESQQAPSSLQKLAEIIQDVPEEFLDPITLEIMPCPMLLPSGKVIDQSTLEKCNRSEATWGRVPSDPFTGVAFTPHSQPLPHPSLKARIDHFLLQHSIPGCHLLGRAQTALAVIPSSIVLPSQKRKIEQAEHVPDSNFGVNASCFSATSPLVLPTTSEHTAKKMKATNEPSLTHMDCSTGPLSHEQKLSQSLEIALASTLGSMPSFTARLTRGQLQHLGTRGSNTSWRPGTGSEQPGSILGPECASCKRVFSPYFKKEPVYQLPCGHLLCRPCLGEKQRSLPMTCTACQRPVASQDVLRVHF.

The U-box domain maps to 258-338 (DVPEEFLDPI…DHFLLQHSIP (81 aa)). An Asymmetric dimethylarginine modification is found at Arg451. The RING-type zinc finger occupies 483-528 (CASCKRVFSPYFKKEPVYQLPCGHLLCRPCLGEKQRSLPMTCTACQ).

Interacts with UBE2L3. Interacts with VCP. In terms of tissue distribution, expressed in liver, heart, brain, kidney and testis.

It localises to the nucleus. It catalyses the reaction S-ubiquitinyl-[E2 ubiquitin-conjugating enzyme]-L-cysteine + [acceptor protein]-L-lysine = [E2 ubiquitin-conjugating enzyme]-L-cysteine + N(6)-ubiquitinyl-[acceptor protein]-L-lysine.. It functions in the pathway protein modification; protein ubiquitination. Functionally, may have a ubiquitin-protein ligase activity acting as an E3 ubiquitin-protein ligase or as a ubiquitin-ubiquitin ligase promoting elongation of ubiquitin chains on substrates. This chain is RING finger protein 37, found in Homo sapiens (Human).